The following is a 165-amino-acid chain: Nucleotide-binding protein TGRD_519 (165 aa).

It belongs to the YajQ family.

Functionally, nucleotide-binding protein. The sequence is that of Nucleotide-binding protein TGRD_519 from Endomicrobium trichonymphae.